The chain runs to 507 residues: ATP synthase subunit alpha, chloroplastic (507 aa).

Position 170–177 (170–177) interacts with ATP; sequence GDRQTGKT.

Belongs to the ATPase alpha/beta chains family. In terms of assembly, F-type ATPases have 2 components, CF(1) - the catalytic core - and CF(0) - the membrane proton channel. CF(1) has five subunits: alpha(3), beta(3), gamma(1), delta(1), epsilon(1). CF(0) has four main subunits: a, b, b' and c.

Its subcellular location is the plastid. It localises to the chloroplast thylakoid membrane. It catalyses the reaction ATP + H2O + 4 H(+)(in) = ADP + phosphate + 5 H(+)(out). Produces ATP from ADP in the presence of a proton gradient across the membrane. The alpha chain is a regulatory subunit. This Ranunculus macranthus (Large buttercup) protein is ATP synthase subunit alpha, chloroplastic.